Here is a 188-residue protein sequence, read N- to C-terminus: Translation initiation factor IF-3 (188 aa).

This sequence belongs to the IF-3 family. In terms of assembly, monomer.

The protein localises to the cytoplasm. Its function is as follows. IF-3 binds to the 30S ribosomal subunit and shifts the equilibrium between 70S ribosomes and their 50S and 30S subunits in favor of the free subunits, thus enhancing the availability of 30S subunits on which protein synthesis initiation begins. The protein is Translation initiation factor IF-3 of Fusobacterium nucleatum subsp. nucleatum (strain ATCC 25586 / DSM 15643 / BCRC 10681 / CIP 101130 / JCM 8532 / KCTC 2640 / LMG 13131 / VPI 4355).